The chain runs to 431 residues: Glutamate-1-semialdehyde 2,1-aminomutase (431 aa).

Position 269 is an N6-(pyridoxal phosphate)lysine (Lys-269).

This sequence belongs to the class-III pyridoxal-phosphate-dependent aminotransferase family. HemL subfamily. Homodimer. Pyridoxal 5'-phosphate serves as cofactor.

The protein resides in the cytoplasm. The catalysed reaction is (S)-4-amino-5-oxopentanoate = 5-aminolevulinate. It functions in the pathway porphyrin-containing compound metabolism; protoporphyrin-IX biosynthesis; 5-aminolevulinate from L-glutamyl-tRNA(Glu): step 2/2. It participates in porphyrin-containing compound metabolism; chlorophyll biosynthesis. The polypeptide is Glutamate-1-semialdehyde 2,1-aminomutase (Pelodictyon phaeoclathratiforme (strain DSM 5477 / BU-1)).